The sequence spans 54 residues: Ovomucoid (54 aa).

Residues 4–54 (VDCSEHPKPACTLEDRPLCGSDNKIYSNKCDFCNAVLESNGTLTLSHFGKC) form the Kazal-like domain. Intrachain disulfides connect Cys-6–Cys-36, Cys-14–Cys-33, and Cys-22–Cys-54. Asn-43 carries an N-linked (GlcNAc...) asparagine glycan.

It localises to the secreted. The chain is Ovomucoid from Argusianus argus (Great argus).